A 553-amino-acid polypeptide reads, in one-letter code: CTP synthase (553 aa).

The interval 1–270 (MTKYVFVTGG…DRLICEELRL (270 aa)) is amidoligase domain. Position 13 (S13) interacts with CTP. S13 provides a ligand contact to UTP. ATP is bound by residues 14-19 (SLGKGI) and D71. Mg(2+) is bound by residues D71 and E144. CTP contacts are provided by residues 151 to 153 (DIE), 191 to 196 (KTKPTQ), and K227. Residues 191–196 (KTKPTQ) and K227 contribute to the UTP site. Positions 295–547 (TIGMVGKYVD…VQAALACQQT (253 aa)) constitute a Glutamine amidotransferase type-1 domain. G356 is a binding site for L-glutamine. The active-site Nucleophile; for glutamine hydrolysis is C383. Residues 384-387 (LGMQ), E407, and R473 contribute to the L-glutamine site. Catalysis depends on residues H520 and E522.

The protein belongs to the CTP synthase family. Homotetramer.

The enzyme catalyses UTP + L-glutamine + ATP + H2O = CTP + L-glutamate + ADP + phosphate + 2 H(+). It catalyses the reaction L-glutamine + H2O = L-glutamate + NH4(+). The catalysed reaction is UTP + NH4(+) + ATP = CTP + ADP + phosphate + 2 H(+). The protein operates within pyrimidine metabolism; CTP biosynthesis via de novo pathway; CTP from UDP: step 2/2. With respect to regulation, allosterically activated by GTP, when glutamine is the substrate; GTP has no effect on the reaction when ammonia is the substrate. The allosteric effector GTP functions by stabilizing the protein conformation that binds the tetrahedral intermediate(s) formed during glutamine hydrolysis. Inhibited by the product CTP, via allosteric rather than competitive inhibition. Its function is as follows. Catalyzes the ATP-dependent amination of UTP to CTP with either L-glutamine or ammonia as the source of nitrogen. Regulates intracellular CTP levels through interactions with the four ribonucleotide triphosphates. The sequence is that of CTP synthase from Burkholderia mallei (strain NCTC 10247).